We begin with the raw amino-acid sequence, 123 residues long: Putative membrane protein insertion efficiency factor (123 aa).

The tract at residues 1 to 23 is disordered; that stretch reads MGSCGGKHTGKGAPKPYSRNFTD.

It belongs to the UPF0161 family.

The protein localises to the cell inner membrane. Could be involved in insertion of integral membrane proteins into the membrane. This Brucella ovis (strain ATCC 25840 / 63/290 / NCTC 10512) protein is Putative membrane protein insertion efficiency factor.